The primary structure comprises 86 residues: Large ribosomal subunit protein bL31B (86 aa).

This sequence belongs to the bacterial ribosomal protein bL31 family. Type B subfamily. In terms of assembly, part of the 50S ribosomal subunit.

This Streptococcus pyogenes serotype M1 protein is Large ribosomal subunit protein bL31B.